The sequence spans 206 residues: Small ribosomal subunit protein uS4 (206 aa).

Residues 94-157 (RRLDNVVYRL…RRRTYFKNLI (64 aa)) enclose the S4 RNA-binding domain.

Belongs to the universal ribosomal protein uS4 family. Part of the 30S ribosomal subunit. Contacts protein S5. The interaction surface between S4 and S5 is involved in control of translational fidelity.

Its function is as follows. One of the primary rRNA binding proteins, it binds directly to 16S rRNA where it nucleates assembly of the body of the 30S subunit. With S5 and S12 plays an important role in translational accuracy. This Roseiflexus sp. (strain RS-1) protein is Small ribosomal subunit protein uS4.